A 316-amino-acid chain; its full sequence is Galectin-8 (316 aa).

Galectin domains are found at residues Tyr18–Arg151 and Phe186–Trp316. The a carbohydrate site is built by Arg68, Asn78, and Glu88. Trp248–Asn254 contributes to the a beta-D-galactoside binding site.

Homodimer. Interacts with CALCOCO2/NDP52. Interacts with PDPN; the interaction is glycosylation-dependent; may participate in connection of the lymphatic endothelium to the surrounding extracellular matrix. Expressed in liver, kidney, cardiac muscle, lung, and brain.

The protein localises to the cytoplasmic vesicle. The protein resides in the cytoplasm. It localises to the cytosol. Beta-galactoside-binding lectin that acts as a sensor of membrane damage caused by infection and restricts the proliferation of infecting pathogens by targeting them for autophagy. Detects membrane rupture by binding beta-galactoside ligands located on the lumenal side of the endosome membrane; these ligands becoming exposed to the cytoplasm following rupture. Restricts infection by initiating autophagy via interaction with CALCOCO2/NDP52. Required to restrict infection of bacterial invasion such as S.typhimurium. Also required to restrict infection of Picornaviridae viruses. Has a marked preference for 3'-O-sialylated and 3'-O-sulfated glycans. This is Galectin-8 (Lgals8) from Rattus norvegicus (Rat).